We begin with the raw amino-acid sequence, 357 residues long: Phosphoribosylformylglycinamidine cyclo-ligase (357 aa).

It belongs to the AIR synthase family.

It localises to the cytoplasm. The enzyme catalyses 2-formamido-N(1)-(5-O-phospho-beta-D-ribosyl)acetamidine + ATP = 5-amino-1-(5-phospho-beta-D-ribosyl)imidazole + ADP + phosphate + H(+). It functions in the pathway purine metabolism; IMP biosynthesis via de novo pathway; 5-amino-1-(5-phospho-D-ribosyl)imidazole from N(2)-formyl-N(1)-(5-phospho-D-ribosyl)glycinamide: step 2/2. The polypeptide is Phosphoribosylformylglycinamidine cyclo-ligase (Rhodopseudomonas palustris (strain BisB18)).